The following is a 93-amino-acid chain: Small ribosomal subunit protein uS19 (93 aa).

The protein belongs to the universal ribosomal protein uS19 family.

Functionally, protein S19 forms a complex with S13 that binds strongly to the 16S ribosomal RNA. The chain is Small ribosomal subunit protein uS19 from Frankia casuarinae (strain DSM 45818 / CECT 9043 / HFP020203 / CcI3).